Consider the following 430-residue polypeptide: tRNA(Ile)-lysidine synthase (430 aa).

21–26 (SGGLDS) lines the ATP pocket.

This sequence belongs to the tRNA(Ile)-lysidine synthase family.

It is found in the cytoplasm. The enzyme catalyses cytidine(34) in tRNA(Ile2) + L-lysine + ATP = lysidine(34) in tRNA(Ile2) + AMP + diphosphate + H(+). Functionally, ligates lysine onto the cytidine present at position 34 of the AUA codon-specific tRNA(Ile) that contains the anticodon CAU, in an ATP-dependent manner. Cytidine is converted to lysidine, thus changing the amino acid specificity of the tRNA from methionine to isoleucine. The polypeptide is tRNA(Ile)-lysidine synthase (Salmonella newport (strain SL254)).